The following is a 513-amino-acid chain: Serine/threonine-protein kinase PBL27 (513 aa).

The interval 1–61 (MSGCLPCFGS…KKELTAPKEG (61 aa)) is disordered. S-palmitoyl cysteine attachment occurs at residues cysteine 4 and cysteine 7. 2 stretches are compositionally biased toward basic and acidic residues: residues 15–27 (AASK…ELSA) and 38–57 (ISLD…ELTA). A Protein kinase domain is found at 83 to 360 (FRPECLLGEG…GDVVTALTYL (278 aa)). ATP contacts are provided by residues 89 to 97 (LGEGGFGRV) and lysine 112. Aspartate 210 (proton acceptor) is an active-site residue. A Phosphoserine; by CERK1 modification is found at serine 244. A phosphothreonine; by CERK1 mark is found at threonine 245 and threonine 250. Residues 365–378 (FDPNAPSGQNSRSG) are compositionally biased toward polar residues. Residues 365–513 (FDPNAPSGQN…GPGSFDSTND (149 aa)) are disordered. Phosphoserine is present on residues serine 392 and serine 401. Basic and acidic residues predominate over residues 417–428 (NSPDYRRRDMVR). Gly residues predominate over residues 434–446 (SEGGSETGGGSGR). Polar residues predominate over residues 456-473 (QESQRGSPASVGRSSRGT). A compositionally biased stretch (basic and acidic residues) spans 475-486 (RNRDLDRERAVA). Positions 504–513 (GPGSFDSTND) are enriched in polar residues.

It belongs to the protein kinase superfamily. Ser/Thr protein kinase family. Interacts with CERK1 (preferentially unphosphorylated) at the plasma membrane. Binds to MAPKKK5 at the plasma membrane; disassociation is induced by chitin perception by the CERK1 complex. Also associates with MAPKKK3. In terms of processing, phosphorylated by CERK1 upon elicitation by chitin. Post-translationally, palmitoylation at Cys-4 and Cys-7 are required for plasma membrane location.

It is found in the cell membrane. It catalyses the reaction L-seryl-[protein] + ATP = O-phospho-L-seryl-[protein] + ADP + H(+). It carries out the reaction L-threonyl-[protein] + ATP = O-phospho-L-threonyl-[protein] + ADP + H(+). Functionally, receptor-like cytoplasmic kinase involved in the transduction of signal between the host cell surface chitin receptor complex CERK1-LYK5 and the intracellular MAPKKK5-dependent mitogen-activated protein kinase (MAPK) cascade that leads to chitin-induced immunity. Phosphorylates and activates MAPKKK5 when phosphorylated by CERK1 after elicitation by chitin. In Arabidopsis thaliana (Mouse-ear cress), this protein is Serine/threonine-protein kinase PBL27.